The sequence spans 483 residues: uncharacterized protein (483 aa).

This is an uncharacterized protein from Acanthamoeba polyphaga mimivirus (APMV).